We begin with the raw amino-acid sequence, 359 residues long: 3-dehydroquinate synthase (359 aa).

NAD(+) is bound by residues 70 to 75, 105 to 109, 129 to 130, Lys-142, Lys-151, and 169 to 172; these read DGEQYK, GVIGD, TT, and FYKT. Residues Glu-184, His-247, and His-264 each coordinate Zn(2+).

The protein belongs to the sugar phosphate cyclases superfamily. Dehydroquinate synthase family. The cofactor is Co(2+). Zn(2+) is required as a cofactor. Requires NAD(+) as cofactor.

Its subcellular location is the cytoplasm. The enzyme catalyses 7-phospho-2-dehydro-3-deoxy-D-arabino-heptonate = 3-dehydroquinate + phosphate. It functions in the pathway metabolic intermediate biosynthesis; chorismate biosynthesis; chorismate from D-erythrose 4-phosphate and phosphoenolpyruvate: step 2/7. Catalyzes the conversion of 3-deoxy-D-arabino-heptulosonate 7-phosphate (DAHP) to dehydroquinate (DHQ). In Francisella tularensis subsp. holarctica (strain FTNF002-00 / FTA), this protein is 3-dehydroquinate synthase.